We begin with the raw amino-acid sequence, 484 residues long: Poly(A) RNA polymerase GLD2 (484 aa).

Residues Ser62 and Ser69 each carry the phosphoserine modification. A Nuclear localization signal motif is present at residues 76 to 92 (KRLSDEKNLPLDGKRQR). Residue Ser95 is modified to Phosphoserine. The Mg(2+) site is built by Asp213 and Asp215. A PAP-associated domain is found at 386–440 (NLGDLLLGFLKYYATEFDWNSQMISVREAKAIPRPDGIEWRNKYICVEEPFDGTN).

This sequence belongs to the DNA polymerase type-B-like family. GLD2 subfamily. Interacts with CPEB1, CPEB2, CPSF1 and PABPC1. Interacts with QKI isoform QKI7; promoting recruitment to miRNA miR-122 and miR-122 stabilization. Requires Mg(2+) as cofactor. Mn(2+) is required as a cofactor.

It localises to the cytoplasm. The protein localises to the nucleus. The catalysed reaction is RNA(n) + ATP = RNA(n)-3'-adenine ribonucleotide + diphosphate. In terms of biological role, cytoplasmic poly(A) RNA polymerase that adds successive AMP monomers to the 3'-end of specific RNAs, forming a poly(A) tail. In contrast to the canonical nuclear poly(A) RNA polymerase, it only adds poly(A) to selected cytoplasmic mRNAs. Does not play a role in replication-dependent histone mRNA degradation. Adds a single nucleotide to the 3' end of specific miRNAs, monoadenylation stabilizes and prolongs the activity of some but not all miRNAs. The sequence is that of Poly(A) RNA polymerase GLD2 from Bos taurus (Bovine).